Reading from the N-terminus, the 2139-residue chain is U5 small nuclear ribonucleoprotein 200 kDa helicase (2139 aa).

Phosphoserine occurs at positions 17 and 26. Residues E39–D80 form a disordered region. K46 participates in a covalent cross-link: Glycyl lysine isopeptide (Lys-Gly) (interchain with G-Cter in SUMO2). Positions E48 to D80 are enriched in basic and acidic residues. Residues D54 to M84 adopt a coiled-coil conformation. Position 225 is a phosphoserine (S225). Position 389 is a phosphothreonine (T389). The segment at D395–A2132 is interaction with C9orf78 and WBP4. Positions R490–L673 constitute a Helicase ATP-binding 1 domain. An ATP-binding site is contributed by A503–T510. The short motif at D615 to H618 is the DEAH box element. Residues P684–G921 form the Helicase C-terminal 1 domain. Residue Y709 is modified to Phosphotyrosine. A Glycyl lysine isopeptide (Lys-Gly) (interchain with G-Cter in SUMO) cross-link involves residue K944. K971 is subject to N6-acetyllysine; alternate. K971 is covalently cross-linked (Glycyl lysine isopeptide (Lys-Gly) (interchain with G-Cter in SUMO); alternate). An SEC63 1 domain is found at T982–F1289. Residues K1071 and K1199 each participate in a glycyl lysine isopeptide (Lys-Gly) (interchain with G-Cter in SUMO) cross-link. The interval L1285–D2139 is interaction with TSSC4. In terms of domain architecture, Helicase ATP-binding 2 spans N1340–F1515. A1353–T1360 is an ATP binding site. T1431 is modified (phosphothreonine). The short motif at D1457–H1460 is the DEAH box element. Residues P1548–D1756 enclose the Helicase C-terminal 2 domain. Phosphothreonine is present on T1768. The region spanning P1815 to V2127 is the SEC63 2 domain. S2005 carries the phosphoserine modification. K2094 participates in a covalent cross-link: Glycyl lysine isopeptide (Lys-Gly) (interchain with G-Cter in SUMO). T2134 is subject to Phosphothreonine. Phosphoserine occurs at positions 2136 and 2138.

The protein belongs to the helicase family. SKI2 subfamily. In terms of assembly, component of a core complex containing at least PRPF8, SNRNP200, EFTUD2 and SNRNP40. Component of the U5 snRNP and U4/U6-U5 tri-snRNP complexes, building blocks of the spliceosome. Component of the U4/U6-U5 tri-snRNP complex composed of the U4, U6 and U5 snRNAs and at least PRPF3, PRPF4, PRPF6, PRPF8, PRPF31, SNRNP200, TXNL4A, SNRNP40, DDX23, CD2BP2, PPIH, SNU13, EFTUD2, SART1 and USP39. Component of precatalytic, catalytic and postcatalytic spliceosomal complexes. Component of the minor spliceosome, which splices U12-type introns. Interacts with C9orf78; the interaction is direct and mutually exclusive with its interaction with WBP4. Interacts with WBP4; the interaction is mutually exclusive with its interaction with C9orf78. Interacts with PRPF8. Interacts with TSSC4; the interaction is direct, excludes recruitment of C9ORF78 and WBP4 to SNRNP200 and negatively regulates its RNA helicase activity.

It localises to the nucleus. The enzyme catalyses ATP + H2O = ADP + phosphate + H(+). In terms of biological role, catalyzes the ATP-dependent unwinding of U4/U6 RNA duplices, an essential step in the assembly of a catalytically active spliceosome. Plays a role in pre-mRNA splicing as core component of precatalytic, catalytic and postcatalytic spliceosomal complexes. As a component of the minor spliceosome, involved in the splicing of U12-type introns in pre-mRNAs. Involved in spliceosome assembly, activation and disassembly. Mediates changes in the dynamic network of RNA-RNA interactions in the spliceosome. In Rattus norvegicus (Rat), this protein is U5 small nuclear ribonucleoprotein 200 kDa helicase (Snrnp200).